The primary structure comprises 315 residues: Homoserine kinase (315 aa).

97–107 (PPARGLGSSAT) contributes to the ATP binding site.

This sequence belongs to the GHMP kinase family. Homoserine kinase subfamily.

Its subcellular location is the cytoplasm. It carries out the reaction L-homoserine + ATP = O-phospho-L-homoserine + ADP + H(+). It functions in the pathway amino-acid biosynthesis; L-threonine biosynthesis; L-threonine from L-aspartate: step 4/5. Functionally, catalyzes the ATP-dependent phosphorylation of L-homoserine to L-homoserine phosphate. In Synechococcus sp. (strain CC9311), this protein is Homoserine kinase.